The chain runs to 156 residues: Small ribosomal subunit protein uS7 (156 aa).

This sequence belongs to the universal ribosomal protein uS7 family. Part of the 30S ribosomal subunit. Contacts proteins S9 and S11.

One of the primary rRNA binding proteins, it binds directly to 16S rRNA where it nucleates assembly of the head domain of the 30S subunit. Is located at the subunit interface close to the decoding center, probably blocks exit of the E-site tRNA. The protein is Small ribosomal subunit protein uS7 of Cutibacterium acnes (strain DSM 16379 / KPA171202) (Propionibacterium acnes).